The sequence spans 118 residues: Small ribosomal subunit protein uS13 (118 aa).

The segment at 94-118 is disordered; it reads GLPVRGQRTKTNARTRKGPRKPIKK.

It belongs to the universal ribosomal protein uS13 family. As to quaternary structure, part of the 30S ribosomal subunit. Forms a loose heterodimer with protein S19. Forms two bridges to the 50S subunit in the 70S ribosome.

Its function is as follows. Located at the top of the head of the 30S subunit, it contacts several helices of the 16S rRNA. In the 70S ribosome it contacts the 23S rRNA (bridge B1a) and protein L5 of the 50S subunit (bridge B1b), connecting the 2 subunits; these bridges are implicated in subunit movement. Contacts the tRNAs in the A and P-sites. The protein is Small ribosomal subunit protein uS13 of Shigella dysenteriae serotype 1 (strain Sd197).